The chain runs to 474 residues: Coiled-coil domain-containing protein 6 (474 aa).

Acidic residues predominate over residues 1 to 10 (MADSASESDT). The segment at 1–47 (MADSASESDTDGAGGNSSSSAAMQSSCSSTSGGGGGGGGGGGGGKSG) is disordered. Position 2 is an N-acetylalanine (A2). Low complexity predominate over residues 16-30 (NSSSSAAMQSSCSST). The span at 31-47 (SGGGGGGGGGGGGGKSG) shows a compositional bias: gly residues. Position 52 is a phosphoserine (S52). Positions 53–237 (PFRLEELTNR…KRILQEKLDQ (185 aa)) form a coiled coil. 3 tandem repeats follow at residues 106–134 (EQEEEFISNTLFKKIQALQKEKETLAVNY), 135–163 (EKEEEFLTNELSRKLMQLQHEKAELEQHL), and 164–192 (EQEQEFQVNKLMKKIKKLENDTISKQLTL). Residues 106–235 (EQEEEFISNT…AEKRILQEKL (130 aa)) are 5 X 29 AA tandem repeats. A 4; approximate repeat occupies 193–206 (EQLRREKIDLENTL). Repeat unit 5 spans residues 207 to 235 (EQEQEALVNRLWKRMDKLEAEKRILQEKL). Phosphoserine is present on residues S240, S244, S249, S254, S284, and S323. Residues 253–332 (DSPENMMRHI…SESESSLEMD (80 aa)) adopt a coiled-coil conformation. Positions 342-369 (AQGLRPRTVSSPIPYTPSPSSSRPISPG) are disordered. Position 349 is a phosphothreonine (T349). Positions 351 to 368 (SSPIPYTPSPSSSRPISP) are enriched in low complexity. Phosphoserine is present on residues S363 and S367. At R387 the chain carries Omega-N-methylarginine. Phosphoserine occurs at positions 395 and 413. The segment at 397-474 (GLHVQHMGTS…QHSAHPSSQP (78 aa)) is disordered. Residues 426-451 (PTPPPSPNTQTPVQPPPPPPPPPMQP) are compositionally biased toward pro residues. Residues 442-451 (PPPPPPPMQP) carry the SH3-binding motif. Residues 459–474 (SQPTPSQHSAHPSSQP) show a composition bias toward low complexity.

In terms of tissue distribution, ubiquitously expressed.

It is found in the cytoplasm. It localises to the cytoskeleton. This chain is Coiled-coil domain-containing protein 6 (CCDC6), found in Homo sapiens (Human).